The chain runs to 131 residues: Small ribosomal subunit protein uS8 (131 aa).

This sequence belongs to the universal ribosomal protein uS8 family. In terms of assembly, part of the 30S ribosomal subunit. Contacts proteins S5 and S12.

Its function is as follows. One of the primary rRNA binding proteins, it binds directly to 16S rRNA central domain where it helps coordinate assembly of the platform of the 30S subunit. The sequence is that of Small ribosomal subunit protein uS8 from Pelagibacter ubique (strain HTCC1062).